Here is a 384-residue protein sequence, read N- to C-terminus: MRFRARVSQSTAKCVVFTGGGTGGHIFPGIAVFQALAQQAAVRVVWIGAARGADRSIVESAGLEFCGITAGKWRRYASVRNFFDVFRVLVGTVQSYCILRALRPQALFSKGGFVSVPPCIAAWLLRIPVVTHESDISPGLATRINARFADRILVSYPHTSCYFPRARRAAVHCTGNPVRQDFFSAQAERAYQFLRIDQKKPLLTVLGGSSGARDLNARVLSCSTFLTERFYLVHQFGAGNEDQMHTITNSLSVNARHAYMSFPFIQAHLPDILAASALVLSRAGANAVWECAVLGKPMILFPLERGSSRGDQIENAEYFSAHGAACILRAQDEKGHQLVSLLTELFHPSCARIEEMARASYTLGIGNAAYDIAQQLQTFIKEGM.

Residues 22-24 (TGG), arginine 179, serine 209, and glutamine 312 contribute to the UDP-N-acetyl-alpha-D-glucosamine site.

It belongs to the glycosyltransferase 28 family. MurG subfamily.

It is found in the cell inner membrane. The catalysed reaction is di-trans,octa-cis-undecaprenyl diphospho-N-acetyl-alpha-D-muramoyl-L-alanyl-D-glutamyl-meso-2,6-diaminopimeloyl-D-alanyl-D-alanine + UDP-N-acetyl-alpha-D-glucosamine = di-trans,octa-cis-undecaprenyl diphospho-[N-acetyl-alpha-D-glucosaminyl-(1-&gt;4)]-N-acetyl-alpha-D-muramoyl-L-alanyl-D-glutamyl-meso-2,6-diaminopimeloyl-D-alanyl-D-alanine + UDP + H(+). Its pathway is cell wall biogenesis; peptidoglycan biosynthesis. Its function is as follows. Cell wall formation. Catalyzes the transfer of a GlcNAc subunit on undecaprenyl-pyrophosphoryl-MurNAc-pentapeptide (lipid intermediate I) to form undecaprenyl-pyrophosphoryl-MurNAc-(pentapeptide)GlcNAc (lipid intermediate II). This is UDP-N-acetylglucosamine--N-acetylmuramyl-(pentapeptide) pyrophosphoryl-undecaprenol N-acetylglucosamine transferase from Treponema pallidum (strain Nichols).